A 234-amino-acid chain; its full sequence is GTP cyclohydrolase 1 (234 aa).

The disordered stretch occupies residues 1–26; that stretch reads MDALIKPLRAGKPDAKPADPKGTEFR. Over residues 11–26 the composition is skewed to basic and acidic residues; the sequence is GKPDAKPADPKGTEFR. Zn(2+) is bound by residues C123, H126, and C194.

This sequence belongs to the GTP cyclohydrolase I family. In terms of assembly, toroid-shaped homodecamer, composed of two pentamers of five dimers.

The catalysed reaction is GTP + H2O = 7,8-dihydroneopterin 3'-triphosphate + formate + H(+). The protein operates within cofactor biosynthesis; 7,8-dihydroneopterin triphosphate biosynthesis; 7,8-dihydroneopterin triphosphate from GTP: step 1/1. The chain is GTP cyclohydrolase 1 from Rhodopseudomonas palustris (strain BisB18).